The following is a 246-amino-acid chain: Thaumatin-like protein 1a (246 aa).

The N-terminal stretch at 1 to 24 (MMKSQVASLLGLTLAILFFSGAHA) is a signal peptide. 8 disulfide bridges follow: Cys33/Cys245, Cys81/Cys91, Cys96/Cys103, Cys151/Cys234, Cys156/Cys217, Cys164/Cys180, Cys184/Cys193, and Cys194/Cys204.

This sequence belongs to the thaumatin family.

Its subcellular location is the secreted. The protein is Thaumatin-like protein 1a (TL1) of Malus domestica (Apple).